We begin with the raw amino-acid sequence, 70 residues long: Protein SlyX homolog (70 aa).

It belongs to the SlyX family.

The protein is Protein SlyX homolog of Shewanella denitrificans (strain OS217 / ATCC BAA-1090 / DSM 15013).